Reading from the N-terminus, the 225-residue chain is MAARQTLRVLCLAGFRQSERGFREKTGALRKTLRGRAELVCLSGPHPVPEAAAPEGSCPDSGPCSPEEQPRGWWFSEEEADVFSALEESTVCRGLQEALETVARALDTLGPFDGLLGFSQGAALAAYVCALGQAGDPRFPLPRFIILVSGFCPRGLKEPILQSPMSLPSLHVFGDTDRVIPSQESMQLASRFLGAVTLTHSGGHFIPAAASQRQAYLKFLDQFAE.

Catalysis depends on charge relay system residues S119, D177, and H204.

Belongs to the LovG family. In terms of tissue distribution, strongly expressed in kidney and liver. Moderately expressed in brain, skin and testis. Weakly expressed in heart, lung, small intestine, spleen, stomach and thymus.

It carries out the reaction a carboxylic ester + H2O = an alcohol + a carboxylate + H(+). Its function is as follows. Exhibits ester hydrolase activity with a strong preference for long-chain alkyl ester substrates and high selectivity against a variety of short, branched, and substituted esters. Is able to hydrolyze ester bonds within a wide range of p-nitrophenyl derivatives (C2-C14) in vitro, with a strong preference toward substrates of &gt;8 carbons. In Mus musculus (Mouse), this protein is Esterase OVCA2 (Ovca2).